We begin with the raw amino-acid sequence, 408 residues long: Cytochrome P450 55A3 (408 aa).

Cys357 contributes to the heme binding site.

The protein belongs to the cytochrome P450 family. Heme serves as cofactor.

In Fusarium lichenicola (Cylindrocarpon lichenicola), this protein is Cytochrome P450 55A3 (CYP55A3).